The primary structure comprises 697 residues: DNA ligase (697 aa).

NAD(+)-binding positions include 44 to 48 (DGEFD), 93 to 94 (SL), and Glu123. Catalysis depends on Lys125, which acts as the N6-AMP-lysine intermediate. The NAD(+) site is built by Arg146, Glu186, Lys302, and Lys326. The Zn(2+) site is built by Cys420, Cys423, Cys439, and Cys445. The region spanning 609–697 (SIPRNLEGLS…GPDAVTDSGV (89 aa)) is the BRCT domain.

Belongs to the NAD-dependent DNA ligase family. LigA subfamily. Requires Mg(2+) as cofactor. It depends on Mn(2+) as a cofactor.

It catalyses the reaction NAD(+) + (deoxyribonucleotide)n-3'-hydroxyl + 5'-phospho-(deoxyribonucleotide)m = (deoxyribonucleotide)n+m + AMP + beta-nicotinamide D-nucleotide.. Its function is as follows. DNA ligase that catalyzes the formation of phosphodiester linkages between 5'-phosphoryl and 3'-hydroxyl groups in double-stranded DNA using NAD as a coenzyme and as the energy source for the reaction. It is essential for DNA replication and repair of damaged DNA. The sequence is that of DNA ligase from Rhodococcus opacus (strain B4).